The sequence spans 857 residues: Thiamine repressible genes regulatory protein thi5 (857 aa).

The segment at residues 38–64 (CLSCRAKKIRCSGSEPCQACIATPSQC) is a DNA-binding region (zn(2)-C6 fungal-type). Disordered stretches follow at residues 152 to 175 (AVKS…NFSS) and 797 to 819 (GHAL…HPSQ). Residues 159-175 (SFPSSSTPPSSDSNFSS) show a composition bias toward low complexity. The segment covering 803–819 (PESNNSSNSFKPSHPSQ) has biased composition (polar residues).

The protein resides in the nucleus. Its function is as follows. Transcription factor that activates the nmt1 promoter. Regulation of thiamine repressible genes. Negatively regulates conjugation during meiosis, by inducing negative regulators which delay conjugation. Involved in thi1 regulation. The sequence is that of Thiamine repressible genes regulatory protein thi5 (thi5) from Schizosaccharomyces pombe (strain 972 / ATCC 24843) (Fission yeast).